A 410-amino-acid chain; its full sequence is Translation initiation factor 2 subunit gamma (410 aa).

The region spanning 9 to 202 (QAEVNIGMVG…AIEEFIPTPE (194 aa)) is the tr-type G domain. The G1 stretch occupies residues 18–25 (GHVDHGKT). Mg(2+) contacts are provided by aspartate 21, threonine 25, glycine 46, and threonine 48. Residue 21 to 26 (DHGKTT) participates in GTP binding. Residues 46–50 (GITIK) are G2. Residues cysteine 61, cysteine 64, cysteine 73, and cysteine 76 each coordinate Zn(2+). The segment at 90–93 (DAPG) is G3. Residues 145–148 (NKIE) and 180–182 (SAL) contribute to the GTP site. Positions 145-148 (NKIE) are G4. Residues 180–182 (SAL) form a G5 region.

The protein belongs to the TRAFAC class translation factor GTPase superfamily. Classic translation factor GTPase family. EIF2G subfamily. As to quaternary structure, heterotrimer composed of an alpha, a beta and a gamma chain. The cofactor is Mg(2+).

The catalysed reaction is GTP + H2O = GDP + phosphate + H(+). Functionally, eIF-2 functions in the early steps of protein synthesis by forming a ternary complex with GTP and initiator tRNA. The sequence is that of Translation initiation factor 2 subunit gamma from Thermococcus onnurineus (strain NA1).